The following is a 320-amino-acid chain: Ubiquitin-like domain-containing CTD phosphatase 1 (320 aa).

The Ubiquitin-like domain maps to valine 6–valine 77. The region spanning proline 136–isoleucine 296 is the FCP1 homology domain. Mg(2+) is bound by residues aspartate 146, aspartate 148, and aspartate 255.

The cofactor is Mg(2+).

It is found in the nucleus. The enzyme catalyses O-phospho-L-seryl-[protein] + H2O = L-seryl-[protein] + phosphate. It catalyses the reaction O-phospho-L-threonyl-[protein] + H2O = L-threonyl-[protein] + phosphate. In terms of biological role, dephosphorylates 26S nuclear proteasomes, thereby decreasing their proteolytic activity. Recruited to the 19S regulatory particle of the 26S proteasome where it dephosphorylates 19S component Rpt1 which impairs Rpt1 ATPase activity and disrupts 26S proteasome assembly. This Drosophila melanogaster (Fruit fly) protein is Ubiquitin-like domain-containing CTD phosphatase 1.